The sequence spans 551 residues: Transcription factor 7-like 1-B (551 aa).

Positions 1 to 11 (MPQLNGGGGDE) are enriched in gly residues. 3 disordered regions span residues 1 to 76 (MPQL…DLES), 298 to 326 (QEPN…KPHI), and 392 to 525 (GWSA…PPSP). Over residues 19-32 (ISFKDEGEQEDKIS) the composition is skewed to basic and acidic residues. A compositionally biased stretch (low complexity) spans 46-61 (SSLVSESENNSSSSDS). Basic and acidic residues predominate over residues 63-76 (QTERRPQPRADLES). The segment at residues 326–394 (IKKPLNAFML…LHSQLYPGWS (69 aa)) is a DNA-binding region (HMG box). A compositionally biased stretch (low complexity) spans 449–468 (SPATPSAALASPAAPAATHS). Positions 469-478 (EQAQPLSLTT) are enriched in polar residues. Over residues 493–505 (SSSSSSSSSSSGL) the composition is skewed to low complexity.

The protein belongs to the TCF/LEF family. In terms of assembly, interacts with ctnnb1.

Its subcellular location is the nucleus. Participates in the Wnt signaling pathway. Probably binds to DNA and acts as a repressor in the absence of ctnnb1, and possibly as an activator in its presence. Regulates anterior-posterior patterning in the neuroectoderm by repressing posterior neural fates. Also required for hindbrain morphogenesis. The chain is Transcription factor 7-like 1-B (tcf7l1b) from Danio rerio (Zebrafish).